The sequence spans 438 residues: MATKEYFPGIGKIKFEGKESKNPMAFRYYDAEKVINGKKMKDWLKFAMAWWHTLCAEGGDQFGGGTKKFPWNGDADKVQAAKNKMDAGFEFMQKMGIEYYCFHDVDLCEEADTIEEYEANLKEIVAYAKQKQAETGIKLLWGTANVFGHARYMNGAATNPEFDVVARAAVQIKNAIDATIELGGSNYVFWGGREGYMSLLNTDQKREKEHLAQMLTIARDYARSKGFTGTFLIEPKPMEPTKHQYDVDTETVVGFLKTHGLDKDFKVNIEVNHATLAGHTFEHELAVAVDNGMLGSIDANRGDYQNGWDTDQFPIDNYELTQAMMQIIRNGGLGNGGTNFDAKTRRNSTDLEDIFIAHIAGMDAMARALESAAALLNESPYCKMLSDRYASFDSGKGKEFEEGKLTLEDVVAYAKQNGEPKQVSGKQELYEAIVNMYC.

Residues His-103 and Asp-106 contribute to the active site. Mg(2+) is bound by residues Glu-234, Glu-270, His-273, Asp-298, Asp-309, Asp-311, and Asp-341.

Belongs to the xylose isomerase family. As to quaternary structure, homotetramer. The cofactor is Mg(2+).

It is found in the cytoplasm. It catalyses the reaction alpha-D-xylose = alpha-D-xylulofuranose. This Phocaeicola vulgatus (strain ATCC 8482 / DSM 1447 / JCM 5826 / CCUG 4940 / NBRC 14291 / NCTC 11154) (Bacteroides vulgatus) protein is Xylose isomerase.